Consider the following 283-residue polypeptide: Cardiolipin synthase (CMP-forming) (283 aa).

A run of 3 helical transmembrane segments spans residues 83–103 (PFIG…LFAF), 155–175 (VSIA…ALFI), and 209–229 (LSKW…LLLL).

It belongs to the CDP-alcohol phosphatidyltransferase class-I family. May be found in a large complex. Mg(2+) is required as a cofactor.

The protein resides in the mitochondrion inner membrane. The catalysed reaction is a CDP-1,2-diacyl-sn-glycerol + a 1,2-diacyl-sn-glycero-3-phospho-(1'-sn-glycerol) = a cardiolipin + CMP + H(+). Its function is as follows. Catalyzes the synthesis of cardiolipin (CL) (diphosphatidylglycerol) by specifically transferring a phosphatidyl group from CDP-diacylglycerol to phosphatidylglycerol (PG). CL is a key phospholipid in mitochondrial membranes and plays important roles in maintaining the functional integrity and dynamics of mitochondria under both optimal and stress conditions. This is Cardiolipin synthase (CMP-forming) (CRD1) from Saccharomyces cerevisiae (strain ATCC 204508 / S288c) (Baker's yeast).